Here is a 194-residue protein sequence, read N- to C-terminus: ATP-dependent Clp protease proteolytic subunit 3 (194 aa).

Residue Ser-96 is the Nucleophile of the active site. Residue His-121 is part of the active site.

It belongs to the peptidase S14 family. Fourteen ClpP subunits assemble into 2 heptameric rings which stack back to back to give a disk-like structure with a central cavity, resembling the structure of eukaryotic proteasomes.

Its subcellular location is the cytoplasm. The enzyme catalyses Hydrolysis of proteins to small peptides in the presence of ATP and magnesium. alpha-casein is the usual test substrate. In the absence of ATP, only oligopeptides shorter than five residues are hydrolyzed (such as succinyl-Leu-Tyr-|-NHMec, and Leu-Tyr-Leu-|-Tyr-Trp, in which cleavage of the -Tyr-|-Leu- and -Tyr-|-Trp bonds also occurs).. Cleaves peptides in various proteins in a process that requires ATP hydrolysis. Has a chymotrypsin-like activity. Plays a major role in the degradation of misfolded proteins. The sequence is that of ATP-dependent Clp protease proteolytic subunit 3 from Rhizobium etli (strain ATCC 51251 / DSM 11541 / JCM 21823 / NBRC 15573 / CFN 42).